Consider the following 95-residue polypeptide: ESAT-6-like protein EsxC (95 aa).

This sequence belongs to the WXG100 family. ESAT-6 subfamily.

It localises to the secreted. The polypeptide is ESAT-6-like protein EsxC (Mycobacterium tuberculosis (strain CDC 1551 / Oshkosh)).